A 161-amino-acid chain; its full sequence is Probable cell wall elongation regulator TseB (161 aa).

Residues 1–5 are Cytoplasmic-facing; the sequence is MRKKA. Residues 6–26 form a helical membrane-spanning segment; that stretch reads LIFTVIFGIIFLAVLLVSASI. The Extracellular segment spans residues 27–161; sequence YKSAMAQKEE…TGKILKNITP (135 aa).

Interacts with the penicillin-binding protein PBP2A, a monofunctional transpeptidase.

It is found in the cell membrane. Its function is as follows. Required for normal cell shape. Plays an important role in cell wall elongation during exponential phase and spore outgrowth. Probably regulates the activity of the penicillin-binding protein PBP2A through a direct interaction. Not required for PBP2A activity, stability and localization. The protein is Probable cell wall elongation regulator TseB of Bacillus subtilis (strain 168).